Here is a 189-residue protein sequence, read N- to C-terminus: dCTP deaminase, dUMP-forming (189 aa).

DCTP contacts are provided by residues 101 to 106, Asp-119, 127 to 129, Gln-148, Tyr-162, and Gln-174; these read KSSLGR and TLE. Glu-129 functions as the Proton donor/acceptor in the catalytic mechanism. Residues 163–189 are disordered; that stretch reads GSSEAGSKYQGQRGPTPSKAYLNFNRS.

Belongs to the dCTP deaminase family. In terms of assembly, homotrimer.

The enzyme catalyses dCTP + 2 H2O = dUMP + NH4(+) + diphosphate. It participates in pyrimidine metabolism; dUMP biosynthesis; dUMP from dCTP: step 1/1. Its function is as follows. Bifunctional enzyme that catalyzes both the deamination of dCTP to dUTP and the hydrolysis of dUTP to dUMP without releasing the toxic dUTP intermediate. This is dCTP deaminase, dUMP-forming from Rhodococcus erythropolis (strain PR4 / NBRC 100887).